A 214-amino-acid chain; its full sequence is MVERAKILEAVTTAIEKAPKRKFSESIDITINLKNIDMAQPKNRIDETILLPNGTGEKTGICVIGRGDIVTQAKDAKVDLILGPDEVERLGGAPREARRVASSYKYFLAETAVMPQVGRFLGPRLGPRGRMPMPIPGQTDIRPIVERLRNSVKIRTKDKTVFSTKVGSTAMTPEQVSENIDAILKRVESVLEQGHLNVRSVFVKTTMGPSVRLV.

Belongs to the universal ribosomal protein uL1 family. As to quaternary structure, part of the 50S ribosomal subunit.

Binds directly to 23S rRNA. Probably involved in E site tRNA release. Functionally, protein L1 is also a translational repressor protein, it controls the translation of its operon by binding to its mRNA. This chain is Large ribosomal subunit protein uL1, found in Methanoregula boonei (strain DSM 21154 / JCM 14090 / 6A8).